Consider the following 289-residue polypeptide: Glycerol facilitator-aquaporin gla (289 aa).

A run of 2 helical transmembrane segments spans residues 10–30 (ITEF…VANV) and 41–61 (SWMI…VAFG). The short motif at 68-70 (NPA) is the NPA 1 element. 3 helical membrane-spanning segments follow: residues 87–107 (AQYI…IVMV), 151–171 (FVGS…FFGS), and 209–229 (MVAH…LGGP). The NPA 2 motif lies at 235–237 (NPA). Residues 264-284 (WYAWVPVLAPILASLAAVALF) traverse the membrane as a helical segment.

This sequence belongs to the MIP/aquaporin (TC 1.A.8) family.

The protein resides in the cell membrane. Functionally, mixed channel protein that transports both water and glycerol. In Lactococcus lactis subsp. lactis (strain IL1403) (Streptococcus lactis), this protein is Glycerol facilitator-aquaporin gla (gla).